A 349-amino-acid polypeptide reads, in one-letter code: uncharacterized protein (349 aa).

Ser2 bears the Phosphoserine mark.

This is an uncharacterized protein from Saccharomyces cerevisiae (strain ATCC 204508 / S288c) (Baker's yeast).